Here is a 296-residue protein sequence, read N- to C-terminus: MLRVLTSTLRFPRPWKPLETRGCSSNPGAAGREIQVCALAGPNQGIAEILMNRPSARNALGNVFVSQLLEALAQLREDRQVRVLIFRSGVKGVFCAGADLKEREQMSEAEVGLFVQRLRGLMTEIAAFPAPTIAAMDGFALGGGLELALACDLRVAASSAVMGLIETTRGLLPGAGGTQRLPRCLGVALAKELIFTGRRLSGAQAQALGLVNHAVAQNEEGNAAYHRARALAQEILPQAPIAVRLSKVAIDRGIEVDIASGMAIEGICYAQNIPTRDRLEGMAAFREKRLPRFVGE.

At K101 the chain carries N6-acetyllysine; alternate. K101 carries the N6-succinyllysine; alternate modification.

Belongs to the enoyl-CoA hydratase/isomerase family.

The protein localises to the mitochondrion. This chain is Enoyl-CoA hydratase domain-containing protein 2, mitochondrial (ECHDC2), found in Bos taurus (Bovine).